The following is a 208-amino-acid chain: Uridine kinase (208 aa).

11 to 18 (GGTGSGKS) lines the ATP pocket.

Belongs to the uridine kinase family.

The protein resides in the cytoplasm. The catalysed reaction is uridine + ATP = UMP + ADP + H(+). It catalyses the reaction cytidine + ATP = CMP + ADP + H(+). It functions in the pathway pyrimidine metabolism; CTP biosynthesis via salvage pathway; CTP from cytidine: step 1/3. The protein operates within pyrimidine metabolism; UMP biosynthesis via salvage pathway; UMP from uridine: step 1/1. This is Uridine kinase from Clostridium novyi (strain NT).